The following is a 206-amino-acid chain: SOSS complex subunit B2 (206 aa).

The segment at residues 26–89 (IVLEIGRVTK…SMWKGCLTLY (64 aa)) is a DNA-binding region (OB). Disordered regions lie at residues 114–146 (EPNP…GTGT) and 166–206 (SYAG…AFKR). The segment covering 181-196 (LPGTANNQTVMTTISN) has biased composition (polar residues).

It belongs to the SOSS-B family. SOSS-B2 subfamily. In terms of assembly, component of the SOSS complex, composed of SOSS-B (SOSS-B1/NABP2 or SOSS-B2/NABP1), SOSS-A/INTS3 and SOSS-C/INIP. SOSS complexes containing SOSS-B1/NABP2 are more abundant than complexes containing SOSS-B2/NABP1.

It localises to the nucleus. Its function is as follows. Component of the SOSS complex, a multiprotein complex that functions downstream of the MRN complex to promote DNA repair and G2/M checkpoint. In the SOSS complex, acts as a sensor of single-stranded DNA that binds to single-stranded DNA, in particular to polypyrimidines. The SOSS complex associates with DNA lesions and influences diverse endpoints in the cellular DNA damage response including cell-cycle checkpoint activation, recombinational repair and maintenance of genomic stability. Required for efficient homologous recombination-dependent repair of double-strand breaks (DSBs) and ATM-dependent signaling pathways. This Bos taurus (Bovine) protein is SOSS complex subunit B2 (NABP1).